The following is a 521-amino-acid chain: Non-specific phospholipase C5 (521 aa).

Residues 478–487 show a composition bias toward basic and acidic residues; sequence SKKARERGGD. Positions 478-521 are disordered; that stretch reads SKKARERGGDENDIVFCVDDDDDHNVVKPPPSQSEPSHATPWSN. Over residues 511-521 the composition is skewed to polar residues; the sequence is SEPSHATPWSN.

It belongs to the bacterial phospholipase C family. Specifically expressed in flowers.

The protein resides in the cytoplasm. Its subcellular location is the cytosol. The enzyme catalyses a 1,2-diacyl-sn-glycero-3-phosphocholine + H2O = phosphocholine + a 1,2-diacyl-sn-glycerol + H(+). In terms of biological role, non-specific phospholipase C (PLC) which assumes minor PLC activity during inorganic phosphate starvation. Can hydrolyze both phosphatidylcholine (PC) and phosphatidylethanolamine (PE). Required for normal accumulation of digalactosyldiacylglycerol (DGDG) during phosphate limitation and may contribute to the conversion of phospholipids to diacylglycerol, the substrate for galactolipid synthesis. This Arabidopsis thaliana (Mouse-ear cress) protein is Non-specific phospholipase C5 (NPC5).